A 74-amino-acid polypeptide reads, in one-letter code: uncharacterized protein (74 aa).

Residues 1-25 form the signal peptide; the sequence is MMMTDLPENIRKTAVALLRLGEATA.

This is an uncharacterized protein from Archaeoglobus fulgidus (strain ATCC 49558 / DSM 4304 / JCM 9628 / NBRC 100126 / VC-16).